The following is a 265-amino-acid chain: 4-hydroxy-tetrahydrodipicolinate reductase (265 aa).

Residues 7–12 (GASGRM) and Asp-33 each bind NAD(+). Arg-34 lines the NADP(+) pocket. NAD(+)-binding positions include 96-98 (GTT) and 120-123 (AANM). His-153 (proton donor/acceptor) is an active-site residue. His-154 provides a ligand contact to (S)-2,3,4,5-tetrahydrodipicolinate. Lys-157 functions as the Proton donor in the catalytic mechanism. Residue 163–164 (GT) coordinates (S)-2,3,4,5-tetrahydrodipicolinate.

This sequence belongs to the DapB family.

The protein localises to the cytoplasm. The catalysed reaction is (S)-2,3,4,5-tetrahydrodipicolinate + NAD(+) + H2O = (2S,4S)-4-hydroxy-2,3,4,5-tetrahydrodipicolinate + NADH + H(+). It catalyses the reaction (S)-2,3,4,5-tetrahydrodipicolinate + NADP(+) + H2O = (2S,4S)-4-hydroxy-2,3,4,5-tetrahydrodipicolinate + NADPH + H(+). The protein operates within amino-acid biosynthesis; L-lysine biosynthesis via DAP pathway; (S)-tetrahydrodipicolinate from L-aspartate: step 4/4. Functionally, catalyzes the conversion of 4-hydroxy-tetrahydrodipicolinate (HTPA) to tetrahydrodipicolinate. This Burkholderia orbicola (strain MC0-3) protein is 4-hydroxy-tetrahydrodipicolinate reductase.